The primary structure comprises 245 residues: tRNA pseudouridine synthase A (245 aa).

Catalysis depends on Asp52, which acts as the Nucleophile. Tyr110 provides a ligand contact to substrate.

This sequence belongs to the tRNA pseudouridine synthase TruA family. As to quaternary structure, homodimer.

The enzyme catalyses uridine(38/39/40) in tRNA = pseudouridine(38/39/40) in tRNA. Formation of pseudouridine at positions 38, 39 and 40 in the anticodon stem and loop of transfer RNAs. The protein is tRNA pseudouridine synthase A of Ruminiclostridium cellulolyticum (strain ATCC 35319 / DSM 5812 / JCM 6584 / H10) (Clostridium cellulolyticum).